Here is a 362-residue protein sequence, read N- to C-terminus: Molybdenum import ATP-binding protein ModC (362 aa).

Residues 1–236 form the ABC transporter domain; that stretch reads MTASGLYLNL…TQSPTAQGED (236 aa). 36–43 provides a ligand contact to ATP; the sequence is GPSGSGKT. The region spanning 297-362 is the Mop domain; sequence DSTILNKLAA…AQVKSVAIVG (66 aa).

This sequence belongs to the ABC transporter superfamily. Molybdate importer (TC 3.A.1.8) family. In terms of assembly, the complex is composed of two ATP-binding proteins (ModC), two transmembrane proteins (ModB) and a solute-binding protein (ModA).

Its subcellular location is the cell inner membrane. It catalyses the reaction molybdate(out) + ATP + H2O = molybdate(in) + ADP + phosphate + H(+). In terms of biological role, part of the ABC transporter complex ModABC involved in molybdenum import. Responsible for energy coupling to the transport system. This is Molybdenum import ATP-binding protein ModC from Saccharophagus degradans (strain 2-40 / ATCC 43961 / DSM 17024).